The primary structure comprises 268 residues: Putative type I specificity subunit S.MpnORF365P (268 aa).

The protein belongs to the type-I restriction system S methylase family. As to quaternary structure, the methyltransferase is composed of M and S polypeptides.

Functionally, the specificity (S) subunit of a type I methyltransferase (MTase); this subunit dictates DNA sequence specificity. The single R subunit has multiple frameshifts and is probably not expressed. This chain is Putative type I specificity subunit S.MpnORF365P, found in Mycoplasma pneumoniae (strain ATCC 29342 / M129 / Subtype 1) (Mycoplasmoides pneumoniae).